A 434-amino-acid polypeptide reads, in one-letter code: MATLEELDAQTLPGDDELDQEILNLSTQELQTRAKLLDNEIRIFRSELQRLSHENNVMLEKIKDNKEKIKNNRQLPYLVANVVEVMDMNEIEDKENSESTTQGGNVNLDNTAVGKAAVVKTSSRQTVFLPMVGLVDPDKLKPNDLVGVNKDSYLILDTLPSEFDSRVKAMEVDEKPTETYSDVGGLDKQIEELVEAIVLPMKRADKFKDMGIRAPKGALMYGPPGTGKTLLARACAAQTNATFLKLAAPQLVQMYIGEGAKLVRDAFALAKEKAPTIIFIDELDAIGTKRFDSEKSGDREVQRTMLELLNQLDGFSSDDRVKVLAATNRVDVLDPALLRSGRLDRKIEFPLPSEDSRAQILQIHSRKMTTDDDINWQELARSTDEFNGAQLKAVTVEAGMIALRNGQSSVKHEDFVEGISEVQARKSKSVSFYA.

Residue A2 is modified to N-acetylalanine. Y180 is subject to Phosphotyrosine. Residue 222 to 229 (GPPGTGKT) participates in ATP binding.

The protein belongs to the AAA ATPase family. Post-translationally, N-acetylated by NAT1.

The protein localises to the cytoplasm. It is found in the nucleus. Functionally, the 26S proteasome is involved in the ATP-dependent degradation of ubiquitinated proteins. The regulatory (or ATPase) complex confers ATP dependency and substrate specificity to the 26S complex. This is 26S proteasome regulatory subunit 6A (RPT5) from Saccharomyces cerevisiae (strain ATCC 204508 / S288c) (Baker's yeast).